We begin with the raw amino-acid sequence, 117 residues long: MGWSCIILFLVAAANGVHSQVQLQQPGTELVKPGASVKLSCKASGYTFTSYWMHWVKQRPGQGLEWIGNINPGNGGTNYNEKFKSKVTLTVDKSSSTAYTQLSSLTSEDSAVYYCAR.

The N-terminal stretch at 1 to 19 is a signal peptide; it reads MGWSCIILFLVAAANGVHS. The segment at 20–49 is framework-1; the sequence is QVQLQQPGTELVKPGASVKLSCKASGYTFT. Cys-41 and Cys-115 are oxidised to a cystine. The complementarity-determining-1 stretch occupies residues 50–54; that stretch reads SYWMH. Positions 55 to 68 are framework-2; sequence WVKQRPGQGLEWIG. The tract at residues 69 to 85 is complementarity-determining-2; sequence NINPGNGGTNYNEKFKS. The interval 86 to 117 is framework-3; the sequence is KVTLTVDKSSSTAYTQLSSLTSEDSAVYYCAR.

In Mus musculus (Mouse), this protein is Ig heavy chain V region 23.